A 177-amino-acid polypeptide reads, in one-letter code: Large ribosomal subunit protein uL6 (177 aa).

This sequence belongs to the universal ribosomal protein uL6 family. Part of the 50S ribosomal subunit.

In terms of biological role, this protein binds to the 23S rRNA, and is important in its secondary structure. It is located near the subunit interface in the base of the L7/L12 stalk, and near the tRNA binding site of the peptidyltransferase center. The chain is Large ribosomal subunit protein uL6 from Delftia acidovorans (strain DSM 14801 / SPH-1).